The primary structure comprises 314 residues: MPTELDKIFLILAIVEFIIGLLGNVFIGLVNCSEGIKNQKVFSADFILTCLAISTIGQLLVILFDSFLVGLASHLYTTYRLGKLVILLWHMTNHLTTWLATCLSIFYFFKIAHFPHSLFLWLRWRMNGMIVMLRTLSLFLLIFDSLVLKLFIDISLNIIDKSNLTLYFDESKTLYDKLSILKTLLSLTSFIPFSLSLTSLLFLFLSLVRHTRNLKLSSLGSRDSSTEAHRRAMKMVMSFLFLFIVHFFSLQVANWIFFMSWNNKYIKFVMLALNAFPSCHSFILILGNSKLRQTAVRLLSHLRNYTKTSNPLPL.

Over 1 to 7 (MPTELDK) the chain is Extracellular. The chain crosses the membrane as a helical span at residues 8-28 (IFLILAIVEFIIGLLGNVFIG). Residues 29 to 50 (LVNCSEGIKNQKVFSADFILTC) are Cytoplasmic-facing. The helical transmembrane segment at 51 to 71 (LAISTIGQLLVILFDSFLVGL) threads the bilayer. Topologically, residues 72 to 101 (ASHLYTTYRLGKLVILLWHMTNHLTTWLAT) are extracellular. Residues 102–122 (CLSIFYFFKIAHFPHSLFLWL) traverse the membrane as a helical segment. The Cytoplasmic portion of the chain corresponds to 123–127 (RWRMN). The helical transmembrane segment at 128–148 (GMIVMLRTLSLFLLIFDSLVL) threads the bilayer. The Extracellular portion of the chain corresponds to 149 to 187 (KLFIDISLNIIDKSNLTLYFDESKTLYDKLSILKTLLSL). A glycan (N-linked (GlcNAc...) asparagine) is linked at N163. A helical membrane pass occupies residues 188–208 (TSFIPFSLSLTSLLFLFLSLV). Residues 209–238 (RHTRNLKLSSLGSRDSSTEAHRRAMKMVMS) are Cytoplasmic-facing. Residues 239-259 (FLFLFIVHFFSLQVANWIFFM) traverse the membrane as a helical segment. At 260–265 (SWNNKY) the chain is on the extracellular side. Residues 266 to 286 (IKFVMLALNAFPSCHSFILIL) form a helical membrane-spanning segment. Residues 287–314 (GNSKLRQTAVRLLSHLRNYTKTSNPLPL) are Cytoplasmic-facing.

Belongs to the G-protein coupled receptor T2R family.

It localises to the membrane. Receptor that may play a role in the perception of bitterness and is gustducin-linked. May play a role in sensing the chemical composition of the gastrointestinal content. The activity of this receptor may stimulate alpha gustducin, mediate PLC-beta-2 activation and lead to the gating of TRPM5. The sequence is that of Taste receptor type 2 member 42 (TAS2R42) from Pongo pygmaeus (Bornean orangutan).